The following is a 112-amino-acid chain: UPF0102 protein C8J_0145 (112 aa).

This sequence belongs to the UPF0102 family.

This is UPF0102 protein C8J_0145 from Campylobacter jejuni subsp. jejuni serotype O:6 (strain 81116 / NCTC 11828).